The chain runs to 257 residues: Acetylglutamate kinase (257 aa).

Substrate-binding positions include 43–44 (GG), Arg65, and Asn157. ATP is bound by residues 180–185 (DVSGIL) and 208–210 (IIT).

This sequence belongs to the acetylglutamate kinase family. ArgB subfamily. In terms of assembly, homodimer.

It is found in the cytoplasm. The enzyme catalyses N-acetyl-L-glutamate + ATP = N-acetyl-L-glutamyl 5-phosphate + ADP. It participates in amino-acid biosynthesis; L-arginine biosynthesis; N(2)-acetyl-L-ornithine from L-glutamate: step 2/4. Functionally, catalyzes the ATP-dependent phosphorylation of N-acetyl-L-glutamate. The sequence is that of Acetylglutamate kinase from Pectobacterium carotovorum subsp. carotovorum (strain PC1).